The following is a 185-amino-acid chain: Peptidyl-tRNA hydrolase (185 aa).

Tyrosine 14 contributes to the tRNA binding site. Residue histidine 19 is the Proton acceptor of the active site. TRNA contacts are provided by phenylalanine 64, asparagine 66, and asparagine 112.

The protein belongs to the PTH family. In terms of assembly, monomer.

It is found in the cytoplasm. The catalysed reaction is an N-acyl-L-alpha-aminoacyl-tRNA + H2O = an N-acyl-L-amino acid + a tRNA + H(+). Hydrolyzes ribosome-free peptidyl-tRNAs (with 1 or more amino acids incorporated), which drop off the ribosome during protein synthesis, or as a result of ribosome stalling. In terms of biological role, catalyzes the release of premature peptidyl moieties from peptidyl-tRNA molecules trapped in stalled 50S ribosomal subunits, and thus maintains levels of free tRNAs and 50S ribosomes. This is Peptidyl-tRNA hydrolase from Levilactobacillus brevis (strain ATCC 367 / BCRC 12310 / CIP 105137 / JCM 1170 / LMG 11437 / NCIMB 947 / NCTC 947) (Lactobacillus brevis).